The following is a 183-amino-acid chain: ATP synthase subunit b, chloroplastic (183 aa).

The chain crosses the membrane as a helical span at residues 20–42 (INTNVFETNIINLAIVVGTLFYY).

This sequence belongs to the ATPase B chain family. In terms of assembly, F-type ATPases have 2 components, F(1) - the catalytic core - and F(0) - the membrane proton channel. F(1) has five subunits: alpha(3), beta(3), gamma(1), delta(1), epsilon(1). F(0) has four main subunits: a(1), b(1), b'(1) and c(10-14). The alpha and beta chains form an alternating ring which encloses part of the gamma chain. F(1) is attached to F(0) by a central stalk formed by the gamma and epsilon chains, while a peripheral stalk is formed by the delta, b and b' chains.

Its subcellular location is the plastid. It localises to the chloroplast thylakoid membrane. In terms of biological role, f(1)F(0) ATP synthase produces ATP from ADP in the presence of a proton or sodium gradient. F-type ATPases consist of two structural domains, F(1) containing the extramembraneous catalytic core and F(0) containing the membrane proton channel, linked together by a central stalk and a peripheral stalk. During catalysis, ATP synthesis in the catalytic domain of F(1) is coupled via a rotary mechanism of the central stalk subunits to proton translocation. Component of the F(0) channel, it forms part of the peripheral stalk, linking F(1) to F(0). The chain is ATP synthase subunit b, chloroplastic from Euglena gracilis.